A 64-amino-acid polypeptide reads, in one-letter code: Putative neurotoxin-H (64 aa).

An N-terminal signal peptide occupies residues methionine 1–cysteine 19. 3 disulfide bridges follow: cysteine 25/cysteine 45, cysteine 32/cysteine 54, and cysteine 36/cysteine 56.

As to expression, expressed by the venom gland.

Its subcellular location is the secreted. The chain is Putative neurotoxin-H from Lychas mucronatus (Chinese swimming scorpion).